The sequence spans 173 residues: Bilin biosynthesis protein PecF (173 aa).

Belongs to the CpcE/RpcE/PecE family.

Its function is as follows. An enzyme involved in the biosynthesis of bilin. The sequence is that of Bilin biosynthesis protein PecF (pecF) from Nostoc sp. (strain PCC 7120 / SAG 25.82 / UTEX 2576).